Reading from the N-terminus, the 75-residue chain is Small ribosomal subunit protein bS18 (75 aa).

It belongs to the bacterial ribosomal protein bS18 family. Part of the 30S ribosomal subunit. Forms a tight heterodimer with protein bS6.

In terms of biological role, binds as a heterodimer with protein bS6 to the central domain of the 16S rRNA, where it helps stabilize the platform of the 30S subunit. The protein is Small ribosomal subunit protein bS18 of Chromobacterium violaceum (strain ATCC 12472 / DSM 30191 / JCM 1249 / CCUG 213 / NBRC 12614 / NCIMB 9131 / NCTC 9757 / MK).